The primary structure comprises 631 residues: DNA ligase (631 aa).

Residues 37–41 (DAHYD) and 79–80 (ST) each bind NAD(+). The N6-AMP-lysine intermediate role is filled by Lys115. Arg131, Glu160, and Lys272 together coordinate NAD(+). Residues Cys361, Cys364, Cys377, and Cys382 each contribute to the Zn(2+) site. The region spanning 539 to 630 (DVSSPISGKG…SQSSPEQMSL (92 aa)) is the BRCT domain.

This sequence belongs to the NAD-dependent DNA ligase family. LigA subfamily. Mg(2+) is required as a cofactor. Requires Mn(2+) as cofactor.

It carries out the reaction NAD(+) + (deoxyribonucleotide)n-3'-hydroxyl + 5'-phospho-(deoxyribonucleotide)m = (deoxyribonucleotide)n+m + AMP + beta-nicotinamide D-nucleotide.. Functionally, DNA ligase that catalyzes the formation of phosphodiester linkages between 5'-phosphoryl and 3'-hydroxyl groups in double-stranded DNA using NAD as a coenzyme and as the energy source for the reaction. It is essential for DNA replication and repair of damaged DNA. This is DNA ligase from Desulfatibacillum aliphaticivorans.